The sequence spans 102 residues: Small ribosomal subunit protein uS14 (102 aa).

Belongs to the universal ribosomal protein uS14 family. Part of the 30S ribosomal subunit. Contacts proteins S3 and S10.

Functionally, binds 16S rRNA, required for the assembly of 30S particles and may also be responsible for determining the conformation of the 16S rRNA at the A site. The chain is Small ribosomal subunit protein uS14 from Ehrlichia ruminantium (strain Gardel).